Here is a 64-residue protein sequence, read N- to C-terminus: Leader peptide SpeFL (64 aa).

The Ornithine recognition loop motif lies at 32–38 (HIRRTRH). Arg-35 contacts L-ornithine.

The protein belongs to the speF operon leader peptide family. As to quaternary structure, binds ornithine in stalled 70S ribosomes, blocking the upper two-thirds of the exit tunnel. Contacts 23S rRNA and ribosomal proteins L4 and L22.

Its function is as follows. A small protein (arrest peptide) encoded upstream of inducible ornithine carboxylase gene (speF) that controls expression of downstream genes (usually speF and potE) by transcriptional and translational attenuation. This chain is Leader peptide SpeFL, found in Haemophilus influenzae (strain ATCC 51907 / DSM 11121 / KW20 / Rd).